Here is a 310-residue protein sequence, read N- to C-terminus: Transcription initiation factor IIA subunit 1 (310 aa).

Disordered stretches follow at residues 52-78 (AISN…LSTV), 91-197 (IQLN…NNKD), and 218-261 (VIPQ…DDPD). 2 stretches are compositionally biased toward low complexity: residues 62-77 (TTAT…TLST) and 122-160 (SNGT…PSSL). Acidic residues-rich tracts occupy residues 173-183 (TLDESDNDDDN), 225-236 (LNDDDDLDDEEI), and 246-261 (DSLG…DDPD).

Belongs to the TFIIA subunit 1 family. As to quaternary structure, TFIIA is a heterodimer of the large subunit 1 and a small subunit gamma.

Its subcellular location is the nucleus. In terms of biological role, TFIIA is a component of the transcription machinery of RNA polymerase II and plays an important role in transcriptional activation. TFIIA in a complex with tbp mediates transcriptional activity. The chain is Transcription initiation factor IIA subunit 1 (gtf2a1) from Dictyostelium discoideum (Social amoeba).